The sequence spans 574 residues: Galectin-3-binding protein (574 aa).

An N-terminal signal peptide occupies residues 1–18; sequence MALLWLLSVFLLVPGTQG. An SRCR domain is found at 24 to 124; it reads MRLVNGASAS…HEKDAGVVCS (101 aa). 3 disulfide bridges follow: cysteine 49–cysteine 113, cysteine 62–cysteine 123, and cysteine 93–cysteine 103. N-linked (GlcNAc...) asparagine glycosylation is found at asparagine 69, asparagine 96, asparagine 102, and asparagine 125. The BTB domain maps to 153 to 221; sequence CDLFIQVTGQ…FYSRRIEVSM (69 aa). A BACK domain is found at 260-360; that stretch reads PLELYEYAQA…MLPQELFELQ (101 aa). N-linked (GlcNAc...) asparagine glycosylation is found at asparagine 362, asparagine 398, asparagine 540, and asparagine 569.

Homodimers and homomultimers. The multimers form ring-like structures with a diameter of 30-40 nm. Binds LGALS1 and LGALS3. Binds ITGB1, COL4A1, COL5A1, COL6A1, FN1 and NID. The unglycosylated form interacts with PDE4DIP; this interaction, which is PDE4DIP isoform-specific, may connect a pericentrosomal complex to the gamma-tubulin ring complex (gamma-TuRC) to promote microtubule assembly and acetylation. As to expression, detected in thyroid (at protein level).

It localises to the secreted. The protein resides in the extracellular space. It is found in the extracellular matrix. Its function is as follows. Promotes integrin-mediated cell adhesion. May stimulate host defense against viruses and tumor cells. The sequence is that of Galectin-3-binding protein (Lgals3bp) from Rattus norvegicus (Rat).